The sequence spans 305 residues: MSFPDITPSLKATMPDLRGRLLANQSLAELTWFRVGGPAQVLFTPADEDDLAYFLAHLASDIPVYVVGVGSNLIVRDGGIAGVVIRLAPRAFGEASASGDIVTAGAAALDKRVAEVAASANIGGLEFYFGIPGTIGGALRMNAGANGGETKDVLIEARGVGRDGTKHVFSNADMKFVYRNSGVDPSIIFTSARFRGEVKDADAIRARMAEVQSHRETAQPIREKTGGSTFKNPPGHSAWKLVDAAGCRGLRVGGAQVSEMHCNFLINTGDATAHDIETLGETVRARVKANSGIELHWEIKRIGVS.

Residues 34 to 199 (RVGGPAQVLF…TSARFRGEVK (166 aa)) form the FAD-binding PCMH-type domain. The active site involves Arg-179. Residue Ser-228 is the Proton donor of the active site. Glu-298 is an active-site residue.

This sequence belongs to the MurB family. It depends on FAD as a cofactor.

The protein resides in the cytoplasm. The catalysed reaction is UDP-N-acetyl-alpha-D-muramate + NADP(+) = UDP-N-acetyl-3-O-(1-carboxyvinyl)-alpha-D-glucosamine + NADPH + H(+). The protein operates within cell wall biogenesis; peptidoglycan biosynthesis. In terms of biological role, cell wall formation. The sequence is that of UDP-N-acetylenolpyruvoylglucosamine reductase from Bradyrhizobium diazoefficiens (strain JCM 10833 / BCRC 13528 / IAM 13628 / NBRC 14792 / USDA 110).